We begin with the raw amino-acid sequence, 391 residues long: Zinc finger protein ubi-d4 (391 aa).

At alanine 2 the chain carries N-acetylalanine. Glycyl lysine isopeptide (Lys-Gly) (interchain with G-Cter in SUMO2) cross-links involve residues lysine 10, lysine 99, lysine 107, and lysine 108. Disordered stretches follow at residues 79–147 and 165–199; these read WRKK…GEFP and DDLD…KLDA. 2 stretches are compositionally biased toward basic and acidic residues: residues 100-110 and 126-140; these read PDTDQTLKKEG and DPLE…RVDD. Phosphoserine is present on serine 142. Residues 165 to 174 show a composition bias toward acidic residues; sequence DDLDDEDYEE. A Phosphotyrosine modification is found at tyrosine 172. Threonine 176 is subject to Phosphothreonine. Residues lysine 178 and lysine 196 each participate in a glycyl lysine isopeptide (Lys-Gly) (interchain with G-Cter in SUMO2) cross-link. Position 200 is a phosphoserine (serine 200). Residues 209-232 form a C2H2-type zinc finger; that stretch reads YACDICGKRYKNRPGLSYHYAHSH. The disordered stretch occupies residues 233 to 266; the sequence is LAEEEGEDKEDSRPPTPVSQRSEEQKSKKGPDGL. Phosphoserine is present on serine 244. Over residues 253–263 the composition is skewed to basic and acidic residues; sequence RSEEQKSKKGP. PHD-type zinc fingers lie at residues 270 to 330 and 327 to 377; these read NNYC…CKCC and CKCC…CLDL. A Phosphoserine modification is found at serine 280. Lysine 281 is covalently cross-linked (Glycyl lysine isopeptide (Lys-Gly) (interchain with G-Cter in SUMO2)).

Belongs to the requiem/DPF family. In terms of assembly, interacts with the nucleosomes, in particular nucleosomes bearing histone H3 crotonylated at 'Lys-14' (H3K14cr) for which DPF2 has high affinity. Also interacts (via PHD-type zinc finger domains) with histone H3 butyrylated at 'Lys-14' (H3K14bu), histone H3 propionylated at 'Lys-14' (H3K14pr), and histone H3 acetylated at 'Lys-14' (H3K14ac). Interacts with histone H3 acetylated at 'Lys-9' (H3K9ac), histone H3 di-methylated at 'Lys-9' (H3K9me2), and histone H3 tri-methylated at 'Lys-9' (H3K9me3). Interacts with histone H4 acetylated at 'Lys-12' (H4K12ac). Interacts with histone H4 acetylated at 'Lys-16' (H4K16ac). Interacts with SWI/SNF complex components. Interacts with SMARCA2, SMARCA4, SMARCB1 and SMARCD1. Interacts with SMARCC1, SMARCC2 and ACTL6A. Interacts with RUNX1. In embryo, highest levels are seen in brain, eyes, thymus and olfactory epithelium in nose, whereas several other tissues, including the musculoskeletal system, show moderate expression. In adult, higher expression in testis, medium in thymus and spleen, lower in certain parts of the brain as the hippocampus. No expression in adult heart, lung, liver, duodenum and kidney.

It localises to the nucleus. The protein resides in the cytoplasm. Plays an active role in transcriptional regulation by binding modified histones H3 and H4. Is a negative regulator of myeloid differentiation of hematopoietic progenitor cells. Might also have a role in the development and maturation of lymphoid cells. Involved in the regulation of non-canonical NF-kappa-B pathway. In Mus musculus (Mouse), this protein is Zinc finger protein ubi-d4 (Dpf2).